Consider the following 330-residue polypeptide: Phosphate acyltransferase (330 aa).

The protein belongs to the PlsX family. In terms of assembly, homodimer. Probably interacts with PlsY.

The protein resides in the cytoplasm. The catalysed reaction is a fatty acyl-[ACP] + phosphate = an acyl phosphate + holo-[ACP]. Its pathway is lipid metabolism; phospholipid metabolism. Functionally, catalyzes the reversible formation of acyl-phosphate (acyl-PO(4)) from acyl-[acyl-carrier-protein] (acyl-ACP). This enzyme utilizes acyl-ACP as fatty acyl donor, but not acyl-CoA. The chain is Phosphate acyltransferase from Bacillus cereus (strain B4264).